The chain runs to 936 residues: DNA topoisomerase 1 (936 aa).

The Toprim domain maps to 15 to 139 (RRLVIVESPT…VKRMVFHEIT (125 aa)). Glu-21 and Asp-108 together coordinate Mg(2+). One can recognise a Topo IA-type catalytic domain in the interval 154–611 (DIALVDAQET…FYFGGEHGVE (458 aa)). An interaction with DNA region spans residues 188-193 (SAGRVQ). Tyr-339 acts as the O-(5'-phospho-DNA)-tyrosine intermediate in catalysis. Disordered regions lie at residues 661–688 (LERMVDDPDNPGEQKPQRANLKEDLTPD), 732–767 (VLPEPEDGGDDGTAGTPAKKGKKPTGPKPRTGSLFR), 841–884 (KRRG…ETNA), and 903–936 (LLADRRARGPVKKKAPAKKAAKKAPAKKAAAKKA). The segment covering 910–936 (RGPVKKKAPAKKAAKKAPAKKAAAKKA) has biased composition (basic residues).

This sequence belongs to the type IA topoisomerase family. As to quaternary structure, monomer. The cofactor is Mg(2+).

The catalysed reaction is ATP-independent breakage of single-stranded DNA, followed by passage and rejoining.. Releases the supercoiling and torsional tension of DNA, which is introduced during the DNA replication and transcription, by transiently cleaving and rejoining one strand of the DNA duplex. Introduces a single-strand break via transesterification at a target site in duplex DNA. The scissile phosphodiester is attacked by the catalytic tyrosine of the enzyme, resulting in the formation of a DNA-(5'-phosphotyrosyl)-enzyme intermediate and the expulsion of a 3'-OH DNA strand. The free DNA strand then undergoes passage around the unbroken strand, thus removing DNA supercoils. Finally, in the religation step, the DNA 3'-OH attacks the covalent intermediate to expel the active-site tyrosine and restore the DNA phosphodiester backbone. Functionally, relaxes negatively (but not positively) supercoiled DNA, concatanates and knots circular ssDNA at 52 but not 37 degrees Celsius. Preferentially nicks supercoiled DNA at C(G/T)CTT, cutting between the TT residues, binds ss and dsDNA with the recognition site. The sequence is that of DNA topoisomerase 1 from Mycolicibacterium smegmatis (strain ATCC 700084 / mc(2)155) (Mycobacterium smegmatis).